A 343-amino-acid polypeptide reads, in one-letter code: Holliday junction branch migration complex subunit RuvB (343 aa).

The tract at residues threonine 4 to tyrosine 193 is large ATPase domain (RuvB-L). Residues leucine 32, arginine 33, glycine 74, lysine 77, threonine 78, threonine 79, glutamate 140–tyrosine 142, arginine 183, tyrosine 193, and arginine 230 each bind ATP. Threonine 78 lines the Mg(2+) pocket. Residues glutamate 194–aspartate 264 form a small ATPAse domain (RuvB-S) region. Positions alanine 267 to lysine 343 are head domain (RuvB-H). Arginine 322 and arginine 327 together coordinate DNA.

It belongs to the RuvB family. In terms of assembly, homohexamer. Forms an RuvA(8)-RuvB(12)-Holliday junction (HJ) complex. HJ DNA is sandwiched between 2 RuvA tetramers; dsDNA enters through RuvA and exits via RuvB. An RuvB hexamer assembles on each DNA strand where it exits the tetramer. Each RuvB hexamer is contacted by two RuvA subunits (via domain III) on 2 adjacent RuvB subunits; this complex drives branch migration. In the full resolvosome a probable DNA-RuvA(4)-RuvB(12)-RuvC(2) complex forms which resolves the HJ.

It localises to the cytoplasm. It catalyses the reaction ATP + H2O = ADP + phosphate + H(+). In terms of biological role, the RuvA-RuvB-RuvC complex processes Holliday junction (HJ) DNA during genetic recombination and DNA repair, while the RuvA-RuvB complex plays an important role in the rescue of blocked DNA replication forks via replication fork reversal (RFR). RuvA specifically binds to HJ cruciform DNA, conferring on it an open structure. The RuvB hexamer acts as an ATP-dependent pump, pulling dsDNA into and through the RuvAB complex. RuvB forms 2 homohexamers on either side of HJ DNA bound by 1 or 2 RuvA tetramers; 4 subunits per hexamer contact DNA at a time. Coordinated motions by a converter formed by DNA-disengaged RuvB subunits stimulates ATP hydrolysis and nucleotide exchange. Immobilization of the converter enables RuvB to convert the ATP-contained energy into a lever motion, pulling 2 nucleotides of DNA out of the RuvA tetramer per ATP hydrolyzed, thus driving DNA branch migration. The RuvB motors rotate together with the DNA substrate, which together with the progressing nucleotide cycle form the mechanistic basis for DNA recombination by continuous HJ branch migration. Branch migration allows RuvC to scan DNA until it finds its consensus sequence, where it cleaves and resolves cruciform DNA. The polypeptide is Holliday junction branch migration complex subunit RuvB (Neisseria gonorrhoeae (strain NCCP11945)).